Here is an 81-residue protein sequence, read N- to C-terminus: Bursicon (81 aa).

Heterodimer of burs and pburs. In terms of tissue distribution, central nervous system. Coexpressed with CCAP in most CCAP-specific neurons. Coexpressed with pburs in the large bilateral lateral neurosecretory neurons of the first three unfused abdominal ganglia and in all anterior bilateral cell pairs in the thoracic ganglia.

It localises to the secreted. Functionally, final heterodimeric neurohormone released at the end of the molting cycle, involved in the sclerotization (tanning) of the insect cuticle, melanization and wing spreading. The sequence is that of Bursicon (burs) from Periplaneta americana (American cockroach).